Reading from the N-terminus, the 205-residue chain is MSTDFLFPKIADCSYVSCYCEENVWKLCEQVKRTRPEELGKCYAVFVSNEGRTVPLWRQKAGRGDDQVVIWDYHVFFMHNPLPNRCLVFDLDTTLPFPTYFHKYVTETFRSDLALRPEHHRFFRVIPADTYLIEFSSDRRHMRRPDGSWIKPPPSYPPILSNTNTHCLGDFICMSAGKGPGSVYSLSEFVQNFYKSAHVMAQQNN.

Active-site residues include Cys20, His74, and Asp90.

It belongs to the NTAQ1 family. Monomer.

The enzyme catalyses N-terminal L-glutaminyl-[protein] + H2O = N-terminal L-glutamyl-[protein] + NH4(+). Functionally, mediates the side-chain deamidation of N-terminal glutamine residues to glutamate, an important step in N-end rule pathway of protein degradation. Conversion of the resulting N-terminal glutamine to glutamate renders the protein susceptible to arginylation, polyubiquitination and degradation as specified by the N-end rule. Does not act on substrates with internal or C-terminal glutamine and does not act on non-glutamine residues in any position. This is Protein N-terminal glutamine amidohydrolase (tun) from Drosophila grimshawi (Hawaiian fruit fly).